A 391-amino-acid polypeptide reads, in one-letter code: Probable dual-specificity RNA methyltransferase RlmN (391 aa).

The tract at residues 1–33 (MTTPLDTPTREPLPLAPAGPGKLVMSAPRRGKP) is disordered. Low complexity predominate over residues 12 to 21 (PLPLAPAGPG). Glu124 acts as the Proton acceptor in catalysis. The 244-residue stretch at 130-373 (YKNRDTICIS…TTVRDTRGSD (244 aa)) folds into the Radical SAM core domain. A disulfide bridge connects residues Cys137 and Cys378. [4Fe-4S] cluster contacts are provided by Cys144, Cys148, and Cys151. Residues 199–200 (GE), Ser233, 256–258 (SLH), and Asn335 each bind S-adenosyl-L-methionine. Catalysis depends on Cys378, which acts as the S-methylcysteine intermediate.

It belongs to the radical SAM superfamily. RlmN family. [4Fe-4S] cluster serves as cofactor.

It localises to the cytoplasm. The enzyme catalyses adenosine(2503) in 23S rRNA + 2 reduced [2Fe-2S]-[ferredoxin] + 2 S-adenosyl-L-methionine = 2-methyladenosine(2503) in 23S rRNA + 5'-deoxyadenosine + L-methionine + 2 oxidized [2Fe-2S]-[ferredoxin] + S-adenosyl-L-homocysteine. The catalysed reaction is adenosine(37) in tRNA + 2 reduced [2Fe-2S]-[ferredoxin] + 2 S-adenosyl-L-methionine = 2-methyladenosine(37) in tRNA + 5'-deoxyadenosine + L-methionine + 2 oxidized [2Fe-2S]-[ferredoxin] + S-adenosyl-L-homocysteine. Specifically methylates position 2 of adenine 2503 in 23S rRNA and position 2 of adenine 37 in tRNAs. The polypeptide is Probable dual-specificity RNA methyltransferase RlmN (Kineococcus radiotolerans (strain ATCC BAA-149 / DSM 14245 / SRS30216)).